Here is a 113-residue protein sequence, read N- to C-terminus: U11-theraphotoxin-Hhn1o (113 aa).

The N-terminal stretch at 1–21 (MNTVRVTFLLVFVLAVSLGQA) is a signal peptide. A propeptide spanning residues 22–74 (DKDENRMEMQEKTEQGKSYLDFAENLLLQKLEELEAKLLEEDSEESRNSRQKR) is cleaved from the precursor. A disordered region spans residues 61–83 (EEDSEESRNSRQKRCIGEGVPCD). 2 disulfides stabilise this stretch: C75–C90 and C82–C95.

The protein belongs to the neurotoxin 14 (magi-1) family. 01 (HNTX-16) subfamily. As to expression, expressed by the venom gland.

The protein resides in the secreted. Functionally, probable ion channel inhibitor. The sequence is that of U11-theraphotoxin-Hhn1o from Cyriopagopus hainanus (Chinese bird spider).